Consider the following 748-residue polypeptide: DNA helicase/primase complex-associated protein (748 aa).

The protein belongs to the herpesviridae HEPA family. Associates with the primase and the helicase to form the helicase-primase complex. Interacts with the origin-binding protein. Interacts with the polymerase catalytic subunit.

The protein localises to the host nucleus. Component of the helicase/primase complex. Unwinds the DNA at the replication forks and generates single-stranded DNA for both leading and lagging strand synthesis. The primase synthesizes short RNA primers on the lagging strand that the polymerase presumably elongates using dNTPs. The primase-associated factor has no known catalytic activity in the complex and may serve to facilitate the formation of the replisome by directly interacting with the origin-binding protein and the polymerase. This is DNA helicase/primase complex-associated protein (UL8) from Bos taurus (Bovine).